Consider the following 504-residue polypeptide: Maturase K (504 aa).

Belongs to the intron maturase 2 family. MatK subfamily.

Its subcellular location is the plastid. The protein resides in the chloroplast. Usually encoded in the trnK tRNA gene intron. Probably assists in splicing its own and other chloroplast group II introns. In Matthiola incana (Common stock), this protein is Maturase K.